The chain runs to 334 residues: MAATIYYENDADLSHLKGKKVAILGYGSQGHAQAQNLRDSGCEVIIGQRPGSANYDLAVSHGFEPMSIAEATKAADVINVLLPDEVQADIYRDSIRDNLSEGNVLMCSHGFNIHFGQIDPPKGIDTLLVAPKGPGHLVRSEYEKGGGVPALIALGEGASETTKQIGLAYAKGIGGTRGGVIETTFAEETETDLFGEQVVLCGGVSELVKAGFDTLVEAGYQPEMAYFECMHELKLIVDLLYEGGLSYMRYSISNTAEYGDYVTGPRIITDETKAEMKKVLEEIQQGEFARKWISENRAGAPFFKATRRRERLHGVEQIGLGLRRMMNWIDEKEV.

In terms of domain architecture, KARI N-terminal Rossmann spans 3-183 (ATIYYENDAD…GGTRGGVIET (181 aa)). NADP(+) is bound by residues 26-29 (YGSQ), Arg49, Ser52, and 84-87 (DEVQ). Residue His109 is part of the active site. Gly135 lines the NADP(+) pocket. One can recognise a KARI C-terminal knotted domain in the interval 184–329 (TFAEETETDL…LGLRRMMNWI (146 aa)). Mg(2+) contacts are provided by Asp192, Glu196, Glu228, and Glu232. Ser253 is a substrate binding site.

The protein belongs to the ketol-acid reductoisomerase family. Mg(2+) is required as a cofactor.

The enzyme catalyses (2R)-2,3-dihydroxy-3-methylbutanoate + NADP(+) = (2S)-2-acetolactate + NADPH + H(+). It carries out the reaction (2R,3R)-2,3-dihydroxy-3-methylpentanoate + NADP(+) = (S)-2-ethyl-2-hydroxy-3-oxobutanoate + NADPH + H(+). The protein operates within amino-acid biosynthesis; L-isoleucine biosynthesis; L-isoleucine from 2-oxobutanoate: step 2/4. It participates in amino-acid biosynthesis; L-valine biosynthesis; L-valine from pyruvate: step 2/4. Functionally, involved in the biosynthesis of branched-chain amino acids (BCAA). Catalyzes an alkyl-migration followed by a ketol-acid reduction of (S)-2-acetolactate (S2AL) to yield (R)-2,3-dihydroxy-isovalerate. In the isomerase reaction, S2AL is rearranged via a Mg-dependent methyl migration to produce 3-hydroxy-3-methyl-2-ketobutyrate (HMKB). In the reductase reaction, this 2-ketoacid undergoes a metal-dependent reduction by NADPH to yield (R)-2,3-dihydroxy-isovalerate. This chain is Ketol-acid reductoisomerase (NADP(+)), found in Rhodopirellula baltica (strain DSM 10527 / NCIMB 13988 / SH1).